A 197-amino-acid polypeptide reads, in one-letter code: Histone chaperone asf1b-A (197 aa).

Belongs to the ASF1 family. As to quaternary structure, interacts with histone H3 and histone H4.

The protein localises to the nucleus. Functionally, histone chaperone that facilitates histone deposition and histone exchange and removal during nucleosome assembly and disassembly. The protein is Histone chaperone asf1b-A (asf1ba) of Danio rerio (Zebrafish).